The primary structure comprises 152 residues: Endoribonuclease YbeY (152 aa).

Zn(2+)-binding residues include histidine 112, histidine 116, and histidine 122.

It belongs to the endoribonuclease YbeY family. It depends on Zn(2+) as a cofactor.

It is found in the cytoplasm. Functionally, single strand-specific metallo-endoribonuclease involved in late-stage 70S ribosome quality control and in maturation of the 3' terminus of the 16S rRNA. The chain is Endoribonuclease YbeY from Pseudoalteromonas translucida (strain TAC 125).